The sequence spans 557 residues: Nucleolin 1 (557 aa).

Disordered regions lie at residues 1 to 297, 376 to 398, and 474 to 557; these read MGKS…GGSK, GERG…GDGG, and LVVD…FGDE. Basic and acidic residues predominate over residues 49–63; it reads QKEKAVKKVPKKVES. Acidic residues-rich tracts occupy residues 64 to 74, 91 to 101, and 124 to 135; these read SDDSDSESEEE, ESSDDSSSDDE, and SSSDDDSSDEEV. Over residues 174–184 the composition is skewed to low complexity; the sequence is AKIAKPAAKDS. The segment covering 186-197 has biased composition (acidic residues); the sequence is SSDDDSDEDSED. Over residues 203 to 217 the composition is skewed to low complexity; it reads KKAAPAAAKAASSSD. Positions 218-229 are enriched in acidic residues; it reads SSDEDSDEESED. Residues 230 to 247 are compositionally biased toward basic and acidic residues; it reads EKPAQKKADTKASKKSSS. A compositionally biased stretch (acidic residues) spans 249-263; sequence ESSESEEDESEDEEE. The span at 264-281 shows a compositional bias: basic and acidic residues; it reads TPKKKSSDVEMVDAEKSS. The RRM 1 domain maps to 297–374; it reads KTLFAANLSF…REIRLDIAQE (78 aa). In terms of domain architecture, RRM 2 spans 401–481; that stretch reads KKIFVKGFDA…FYLVVDEPRP (81 aa). Over residues 485-503 the composition is skewed to gly residues; sequence SSGGGGFGRGNGRFGSGGG.

As to quaternary structure, interacts with THAL in the nucleus. Expressed in roots, leaves, shoots and flowers.

It is found in the nucleus. The protein localises to the nucleolus. Involved in pre-rRNA processing and ribosome assembly. Is associated with intranucleolar chromatin and pre-ribosomal particles and plays a role in controlling activation and repression of a specific subset of rRNA genes located in distinctive nucleolar organizer regions. Binds specifically rDNA chromatin and may be required to maintain rDNA chromatin structure, but is probably not required for the overall histone methylation status of 45S rRNA genes. Involved in leaf polarity establishment by functioning cooperatively with AS1 to repress abaxial genes ARF3, ARF4, KAN1, KAN2, YAB1 and YAB5, and the knox homeobox genes KNAT1, KNAT2, KNAT6, and STM to promote adaxial development in leaf primordia at shoot apical meristems at high temperatures. The chain is Nucleolin 1 from Arabidopsis thaliana (Mouse-ear cress).